The primary structure comprises 295 residues: Cutinase 11 (295 aa).

The signal sequence occupies residues 1 to 17 (MQTSALLLAAQALVASA). The cysteines at positions 25 and 102 are disulfide-linked. Active-site residues include serine 113, aspartate 198, and histidine 210. Cysteine 184 and cysteine 202 are disulfide-bonded. The tract at residues 228–258 (KLNSGGSPPTTPPTTPPTTPPTTPPTTPPPS) is disordered. Over residues 236 to 258 (PTTPPTTPPTTPPTTPPTTPPPS) the composition is skewed to pro residues. In terms of domain architecture, CBM1 spans 260–295 (SCAALYGQCGGQGWNGATCCSQGTCRASNQWYSQCL).

This sequence belongs to the cutinase family. Post-translationally, the 2 disulfide bonds play a critical role in holding the catalytic residues in juxta-position; reduction of the disulfide bridges results in the complete inactivation of the enzyme.

It localises to the secreted. The enzyme catalyses cutin + H2O = cutin monomers.. Its function is as follows. Catalyzes the hydrolysis of complex carboxylic polyesters found in the cell wall of plants. May degrade cutin, a macromolecule that forms the structure of the plant cuticle. May also degrade suberin, a specialized macromolecule found in the cell wall of various plant tissues. Allows pathogenic fungi to penetrate through the cuticular barrier into the host plant during the initial stage of fungal infection. Involved in pathogenesis. The chain is Cutinase 11 from Verticillium dahliae (Verticillium wilt).